The chain runs to 157 residues: Selenoprotein F (157 aa).

Positions Met-1–Ala-19 are cleaved as a signal peptide. Position 84 (Sec-84) is a non-standard amino acid, selenocysteine.

Belongs to the selenoprotein M/F family. As to expression, expressed in the brain, liver and retina. Localized to the retinal ganglion cell layer, the inner nuclear layer and the outer nuclear layer at both parr and smolt stages.

The protein resides in the endoplasmic reticulum lumen. May be involved in redox reactions associated with the formation of disulfide bonds. May contribute to the quality control of protein folding in the endoplasmic reticulum. May be involved in retinal development. This chain is Selenoprotein F, found in Oncorhynchus mykiss (Rainbow trout).